Reading from the N-terminus, the 777-residue chain is CRISPR system single-strand-specific deoxyribonuclease Cas10/Csm1 (subtype III-A) (777 aa).

Positions 1–106 (MEIDELTALG…VYEADNLASG (106 aa)) constitute an HD domain. The region spanning 513-660 (RRLGVMKGDV…GRNRVFVVGR (148 aa)) is the GGDEF domain.

Belongs to the CRISPR-associated Cas10/Csm1 family. Probably part of the Csm effector complex, that includes Cas10, Csm2, Csm3, Csm4, Csm5 and mature crRNA. Will form a homodimer in solution, interacts with Csm4, which is a tighter, better association than the homodimeric Cas10 and uses the same interface for interaction. A divalent metal cation serves as cofactor.

With respect to regulation, ssDNase activity is inhibited by EDTA. In terms of biological role, CRISPR (clustered regularly interspaced short palindromic repeat) is an adaptive immune system that provides protection against mobile genetic elements (viruses, transposable elements and conjugative plasmids). CRISPR clusters contain spacers, sequences complementary to antecedent mobile elements, and target invading nucleic acids. CRISPR clusters are transcribed and processed into CRISPR RNA (crRNA). The type III-A Csm effector complex binds crRNA and acts as a crRNA-guided RNase, DNase and cyclic oligoadenylate synthase; binding of target RNA cognate to the crRNA is required for all activities. Its function is as follows. A single-strand deoxyribonuclease (ssDNase) which digests linear and circular ssDNA; has 5'-3' and 3'-5' exonuclease activity as well as a less efficient endonuclease activity. Has a minimal size requirement; 100 nucleotide ssDNA (nt) is more efficiently digested than 50 or 25 nt ssDNA, while 14 nt ssDNA is not cleaved at all. It has no activity on dsDNA or ssRNA. SsDNase activity is stimulated in the ternary Csm effector complex; binding of cognate target RNA activates the ssDNase, as the target RNA is degraded ssDNA activity decreases. Functionally, when associated with the ternary Csm effector complex (the crRNA, Cas proteins and a cognate target ssRNA) synthesizes cyclic oligoadenylates (cOA) from ATP. cOAs are second messengers that stimulate the ssRNase activity of Csm6, inducing an antiviral state important for defense against invading nucleic acids. The polypeptide is CRISPR system single-strand-specific deoxyribonuclease Cas10/Csm1 (subtype III-A) (Thermococcus onnurineus (strain NA1)).